The sequence spans 344 residues: Arginine N-succinyltransferase (344 aa).

Leu125 serves as a coordination point for succinyl-CoA. His229 (proton donor) is an active-site residue.

It belongs to the arginine N-succinyltransferase family.

It catalyses the reaction succinyl-CoA + L-arginine = N(2)-succinyl-L-arginine + CoA + H(+). The protein operates within amino-acid degradation; L-arginine degradation via AST pathway; L-glutamate and succinate from L-arginine: step 1/5. Its function is as follows. Catalyzes the transfer of succinyl-CoA to arginine to produce N(2)-succinylarginine. The sequence is that of Arginine N-succinyltransferase from Escherichia coli O157:H7.